The primary structure comprises 725 residues: Sodium/hydrogen exchanger 7 (725 aa).

The disordered stretch occupies residues 1–20; sequence MEPGDAARPGSGRATGAPPP. Over 1–21 the chain is Cytoplasmic; it reads MEPGDAARPGSGRATGAPPPR. The helical transmembrane segment at 22–42 threads the bilayer; that stretch reads LLLLPLLLGWGLRVAAAASAS. The Lumenal segment spans residues 43–70; sequence SSGAAAEDSSAMEELATEKEAEESHRQD. The helical transmembrane segment at 71–91 threads the bilayer; the sequence is SVSLLTFILLLTLTILTIWLF. The Cytoplasmic portion of the chain corresponds to 92–95; it reads KHRR. Residues 96–116 traverse the membrane as a helical segment; the sequence is VRFLHETGLAMIYGLIVGVIL. Topologically, residues 117–175 are lumenal; it reads RYGTPATSGRDKSLSCTQEDRAFSTLLVNVSGKFFEYTLKGEISPGKINSVEQNDMLRK. A glycan (N-linked (GlcNAc...) asparagine) is linked at asparagine 145. Residues 176 to 196 traverse the membrane as a helical segment; the sequence is VTFDPEVFFNILLPPIIFHAG. Residues 197–210 lie on the Cytoplasmic side of the membrane; that stretch reads YSLKKRHFFRNLGS. The helical transmembrane segment at 211-231 threads the bilayer; that stretch reads ILAYAFLGTAVSCFIIGNLMY. Over 232 to 251 the chain is Lumenal; the sequence is GVVKLMKIMGQLSDKFYYTD. Residues 252-272 traverse the membrane as a helical segment; it reads CLFFGAIISATDPVTVLAIFN. Topologically, residues 273 to 277 are cytoplasmic; that stretch reads ELHAD. A helical transmembrane segment spans residues 278–298; that stretch reads VDLYALLFGESVLNDAVAIVL. Residues 299-322 are Lumenal-facing; it reads SSSIVAYQPAGLNTHAFDAAAFFK. The chain crosses the membrane as a helical span at residues 323–343; it reads SVGIFLGIFSGSFTMGAVTGV. The Cytoplasmic portion of the chain corresponds to 344 to 349; the sequence is NANVTK. Helical transmembrane passes span 350 to 370 and 371 to 391; these read FTKL…MSWS and TFLL…FCGI. Residues 392–414 lie on the Cytoplasmic side of the membrane; sequence TQAHYTYNNLSVESRSRTKQLFE. Residues 415-435 form a helical membrane-spanning segment; the sequence is VLHFLAENFIFSYMGLALFTF. The Lumenal portion of the chain corresponds to 436–442; it reads QKHVFSP. The helical transmembrane segment at 443-463 threads the bilayer; it reads IFIIGAFVAIFLGRAAHIYPL. Over 464–474 the chain is Cytoplasmic; the sequence is SFFLNLGRRHK. Residues 475-497 form a helical membrane-spanning segment; the sequence is IGWNFQHMMMFSGLRGAMAFALA. Topologically, residues 498–513 are lumenal; the sequence is IRDTASYARQMMFTTT. A helical transmembrane segment spans residues 514–534; the sequence is LLIVFFTVWIIGGGTTPMLSW. 2 required for trans-Golgi network localization regions span residues 533–559 and 563–568; these read SWLN…YFRV and PDQDPP. Residues 535–725 lie on the Cytoplasmic side of the membrane; it reads LNIRVGVEEP…RLVFPLEDNA (191 aa). Serine 545 is modified (phosphoserine). Disordered stretches follow at residues 567–590 and 669–714; these read PPPN…GNRT and TVTA…SSRG. Low complexity predominate over residues 675 to 684; it reads SSSSHTASTS. A compositionally biased stretch (basic and acidic residues) spans 687-704; that stretch reads GSRRTKSSSEEVLERDLG.

The protein belongs to the monovalent cation:proton antiporter 1 (CPA1) transporter (TC 2.A.36) family. As to quaternary structure, interacts with SCAMP1, SCAMP2 and SCAMP5; may participate in its shuttling from trans-Golgi network to recycling endosomes. N-glycosylated. Ubiquitously expressed.

It is found in the golgi apparatus. The protein localises to the trans-Golgi network membrane. Its subcellular location is the recycling endosome membrane. It localises to the cell membrane. The enzyme catalyses Na(+)(in) + H(+)(out) = Na(+)(out) + H(+)(in). It catalyses the reaction K(+)(in) + H(+)(out) = K(+)(out) + H(+)(in). Inhibited by benzamil and quinine but not by amiloride. Functionally, golgi Na(+), K(+)/(H+) antiporter. Mediates the electoneutral influx of Na(+) or K(+) in exchange for H(+). May contribute to the regulation of Golgi apparatus volume and pH. In Homo sapiens (Human), this protein is Sodium/hydrogen exchanger 7 (SLC9A7).